Reading from the N-terminus, the 325-residue chain is Phosphate acyltransferase (325 aa).

It belongs to the PlsX family. As to quaternary structure, homodimer. Probably interacts with PlsY.

It is found in the cytoplasm. It carries out the reaction a fatty acyl-[ACP] + phosphate = an acyl phosphate + holo-[ACP]. It functions in the pathway lipid metabolism; phospholipid metabolism. In terms of biological role, catalyzes the reversible formation of acyl-phosphate (acyl-PO(4)) from acyl-[acyl-carrier-protein] (acyl-ACP). This enzyme utilizes acyl-ACP as fatty acyl donor, but not acyl-CoA. In Mycoplasmopsis pulmonis (strain UAB CTIP) (Mycoplasma pulmonis), this protein is Phosphate acyltransferase.